A 375-amino-acid chain; its full sequence is Succinyl-diaminopimelate desuccinylase (375 aa).

Residue His66 coordinates Zn(2+). Residue Asp68 is part of the active site. Residue Asp99 participates in Zn(2+) binding. Glu133 functions as the Proton acceptor in the catalytic mechanism. Glu134, Glu162, and His348 together coordinate Zn(2+).

It belongs to the peptidase M20A family. DapE subfamily. In terms of assembly, homodimer. Requires Zn(2+) as cofactor. It depends on Co(2+) as a cofactor.

The catalysed reaction is N-succinyl-(2S,6S)-2,6-diaminopimelate + H2O = (2S,6S)-2,6-diaminopimelate + succinate. Its pathway is amino-acid biosynthesis; L-lysine biosynthesis via DAP pathway; LL-2,6-diaminopimelate from (S)-tetrahydrodipicolinate (succinylase route): step 3/3. Functionally, catalyzes the hydrolysis of N-succinyl-L,L-diaminopimelic acid (SDAP), forming succinate and LL-2,6-diaminopimelate (DAP), an intermediate involved in the bacterial biosynthesis of lysine and meso-diaminopimelic acid, an essential component of bacterial cell walls. This is Succinyl-diaminopimelate desuccinylase from Teredinibacter turnerae (strain ATCC 39867 / T7901).